A 489-amino-acid polypeptide reads, in one-letter code: Bridging integrator 2 (489 aa).

In terms of domain architecture, BAR spans 28–244; the sequence is VLQKLGKTVE…MSKLEKQHSN (217 aa). Positions 267–302 are enriched in low complexity; the sequence is QSCAASSPVSPVSPVSPVTSPTSPSATSEPESVSAT. The tract at residues 267-489 is disordered; that stretch reads QSCAASSPVS…ASGGLVGLFL (223 aa). S273 is subject to Phosphoserine. Residues 311-331 are compositionally biased toward acidic residues; it reads GGEDSCESQESLKDEEADEAQ. A Phosphoserine modification is found at S357. The span at 358–368 shows a compositional bias: low complexity; the sequence is QEEALSSSAQS. Phosphoserine is present on residues S380, S392, S420, S422, S424, S430, S435, S439, and S443.

Homodimer. Interacts with BIN1. Interacts with ARHGEF6 (via SH3 domain), ARHGEF7 (via SH3 domain), SH3GL1, SH3GL2 and SH3GL3. Identified in a complex with ARHGEF6 and GIT2.

It localises to the cytoplasm. It is found in the cell projection. Its subcellular location is the podosome membrane. The protein localises to the cell cortex. The protein resides in the phagocytic cup. Its function is as follows. Promotes cell motility and migration, probably via its interaction with the cell membrane and with podosome proteins that mediate interaction with the cytoskeleton. Modulates membrane curvature and mediates membrane tubulation. Inhibits phagocytosis. Plays a role in podosome formation. The sequence is that of Bridging integrator 2 (Bin2) from Mus musculus (Mouse).